We begin with the raw amino-acid sequence, 205 residues long: Proteasome subunit beta type-3 (205 aa).

It belongs to the peptidase T1B family. The 26S proteasome consists of a 20S proteasome core and two 19S regulatory subunits. The 20S proteasome core is composed of 28 subunits that are arranged in four stacked rings, resulting in a barrel-shaped structure. The two end rings are each formed by seven alpha subunits, and the two central rings are each formed by seven beta subunits. The catalytic chamber with the active sites is on the inside of the barrel.

It localises to the cytoplasm. It is found in the nucleus. Non-catalytic component of the proteasome, a multicatalytic proteinase complex which is characterized by its ability to cleave peptides with Arg, Phe, Tyr, Leu, and Glu adjacent to the leaving group at neutral or slightly basic pH. The proteasome has an ATP-dependent proteolytic activity. In Oncorhynchus mykiss (Rainbow trout), this protein is Proteasome subunit beta type-3 (psmb3).